The primary structure comprises 721 residues: Exo beta-1,2-glucooligosaccharide sophorohydrolase (non-reducing end) (721 aa).

The N-terminal stretch at 1–18 (MKHIALLTTLLLSASLQA) is a signal peptide. One can recognise a Glycoamylase-like domain in the interval 474–708 (NHKLIGWNET…LLWNLFMSHP (235 aa)).

Monomer.

Its subcellular location is the periplasm. It carries out the reaction [(1-&gt;2)-beta-D-glucosyl](n) + H2O = [(1-&gt;2)-beta-D-glucosyl](n-2) + sophorose. Catalyzes the hydrolysis of linear beta-1,2-glucan and beta-1,2-glucooligosaccharides with degrees of polymerization (DPs) greater than or equal to 4, to produce sophorose. The best substrates are tetra- and pentasaccharides. Acts as an exo-type enzyme that releases sophorose from the non-reducing end of the substrate. It cannot hydrolyze cyclic beta-1,2-glucans. This Parabacteroides distasonis (strain ATCC 8503 / DSM 20701 / CIP 104284 / JCM 5825 / NCTC 11152) protein is Exo beta-1,2-glucooligosaccharide sophorohydrolase (non-reducing end).